The primary structure comprises 421 residues: Gamma-glutamyl phosphate reductase (421 aa).

The protein belongs to the gamma-glutamyl phosphate reductase family.

It localises to the cytoplasm. It carries out the reaction L-glutamate 5-semialdehyde + phosphate + NADP(+) = L-glutamyl 5-phosphate + NADPH + H(+). It participates in amino-acid biosynthesis; L-proline biosynthesis; L-glutamate 5-semialdehyde from L-glutamate: step 2/2. Catalyzes the NADPH-dependent reduction of L-glutamate 5-phosphate into L-glutamate 5-semialdehyde and phosphate. The product spontaneously undergoes cyclization to form 1-pyrroline-5-carboxylate. The sequence is that of Gamma-glutamyl phosphate reductase from Acinetobacter baumannii (strain AYE).